A 231-amino-acid chain; its full sequence is 7-cyano-7-deazaguanine synthase (231 aa).

Position 8 to 18 (8 to 18 (FSGGQDSTTCL)) interacts with ATP. Zn(2+) contacts are provided by Cys-188, Cys-197, Cys-200, and Cys-203.

Belongs to the QueC family. The cofactor is Zn(2+).

The enzyme catalyses 7-carboxy-7-deazaguanine + NH4(+) + ATP = 7-cyano-7-deazaguanine + ADP + phosphate + H2O + H(+). It functions in the pathway purine metabolism; 7-cyano-7-deazaguanine biosynthesis. Catalyzes the ATP-dependent conversion of 7-carboxy-7-deazaguanine (CDG) to 7-cyano-7-deazaguanine (preQ(0)). The sequence is that of 7-cyano-7-deazaguanine synthase from Sodalis glossinidius (strain morsitans).